The primary structure comprises 346 residues: D-fructose 1,6-bisphosphatase class 2/sedoheptulose 1,7-bisphosphatase (346 aa).

Mn(2+) is bound by residues D33, E57, D97, and E100. Residues 100-102 (EGT), Y131, 176-178 (RDR), and 198-200 (DGD) each bind substrate. E225 provides a ligand contact to Mn(2+).

This sequence belongs to the FBPase class 2 family. Homotetramer. Mn(2+) is required as a cofactor.

It catalyses the reaction beta-D-fructose 1,6-bisphosphate + H2O = beta-D-fructose 6-phosphate + phosphate. The catalysed reaction is D-sedoheptulose 1,7-bisphosphate + H2O = D-sedoheptulose 7-phosphate + phosphate. It participates in carbohydrate biosynthesis; Calvin cycle. In terms of biological role, catalyzes the hydrolysis of fructose 1,6-bisphosphate (Fru 1,6-P2) and sedoheptulose 1,7-bisphosphate (Sed 1,7-P2) to fructose 6-phosphate and sedoheptulose 7-phosphate, respectively. This is D-fructose 1,6-bisphosphatase class 2/sedoheptulose 1,7-bisphosphatase from Gloeobacter violaceus (strain ATCC 29082 / PCC 7421).